A 678-amino-acid chain; its full sequence is UvrABC system protein B (678 aa).

Positions 35–422 (EGVSDGLMFQ…ADNVVEQVVR (388 aa)) constitute a Helicase ATP-binding domain. 48-55 (GVTGSGKT) provides a ligand contact to ATP. The Beta-hairpin signature appears at 101 to 124 (YYDYYQPEAYVPTRDLFIEKDSSI). Positions 439 to 605 (QVDDLLGEIH…GVSKAVRELI (167 aa)) constitute a Helicase C-terminal domain. Positions 633-668 (AREIRRLEKLMMDHARNLEFEQAAAARDALNALKSR) constitute a UVR domain.

Belongs to the UvrB family. Forms a heterotetramer with UvrA during the search for lesions. Interacts with UvrC in an incision complex.

Its subcellular location is the cytoplasm. The UvrABC repair system catalyzes the recognition and processing of DNA lesions. A damage recognition complex composed of 2 UvrA and 2 UvrB subunits scans DNA for abnormalities. Upon binding of the UvrA(2)B(2) complex to a putative damaged site, the DNA wraps around one UvrB monomer. DNA wrap is dependent on ATP binding by UvrB and probably causes local melting of the DNA helix, facilitating insertion of UvrB beta-hairpin between the DNA strands. Then UvrB probes one DNA strand for the presence of a lesion. If a lesion is found the UvrA subunits dissociate and the UvrB-DNA preincision complex is formed. This complex is subsequently bound by UvrC and the second UvrB is released. If no lesion is found, the DNA wraps around the other UvrB subunit that will check the other stand for damage. The chain is UvrABC system protein B from Bordetella pertussis (strain Tohama I / ATCC BAA-589 / NCTC 13251).